Here is a 310-residue protein sequence, read N- to C-terminus: Ribonuclease Z (310 aa).

Residues His64, His66, Asp68, His69, His146, Asp215, and His273 each contribute to the Zn(2+) site. Catalysis depends on Asp68, which acts as the Proton acceptor.

The protein belongs to the RNase Z family. Homodimer. Zn(2+) is required as a cofactor.

The catalysed reaction is Endonucleolytic cleavage of RNA, removing extra 3' nucleotides from tRNA precursor, generating 3' termini of tRNAs. A 3'-hydroxy group is left at the tRNA terminus and a 5'-phosphoryl group is left at the trailer molecule.. Its function is as follows. Zinc phosphodiesterase, which displays some tRNA 3'-processing endonuclease activity. Probably involved in tRNA maturation, by removing a 3'-trailer from precursor tRNA. This chain is Ribonuclease Z, found in Aeropyrum pernix (strain ATCC 700893 / DSM 11879 / JCM 9820 / NBRC 100138 / K1).